The sequence spans 283 residues: Probable replication-associated protein repA1 (283 aa).

It belongs to the IncFII RepA family.

This protein is essential for plasmid replication; it is involved in copy control functions. This chain is Probable replication-associated protein repA1 (repA1), found in Buchnera aphidicola subsp. Acyrthosiphon pisum (strain APS) (Acyrthosiphon pisum symbiotic bacterium).